The following is a 147-amino-acid chain: Cysteine proteinase inhibitor 2 (147 aa).

The N-terminal stretch at 1-27 is a signal peptide; sequence MATMLKVSLVLSLLGFLVIAVVTPSAA. In terms of domain architecture, Cystatin spans 87–117; sequence LQFSRVVSAQKQVVAGLKYYLRIEVTQPNGS. A Secondary area of contact motif is present at residues 98 to 102; sequence QVVAG. N-linked (GlcNAc...) asparagine glycosylation is present at Asn115.

This sequence belongs to the cystatin family. Phytocystatin subfamily.

It is found in the secreted. Functionally, specific inhibitor of cysteine proteinases. Probably involved in the regulation of endogenous processes and in defense against pests and pathogens. The protein is Cysteine proteinase inhibitor 2 (CYS2) of Arabidopsis thaliana (Mouse-ear cress).